The chain runs to 287 residues: Bifunctional protein FolD 1 (287 aa).

NADP(+) contacts are provided by residues 170–172 (GRS) and serine 195.

Belongs to the tetrahydrofolate dehydrogenase/cyclohydrolase family. As to quaternary structure, homodimer.

The enzyme catalyses (6R)-5,10-methylene-5,6,7,8-tetrahydrofolate + NADP(+) = (6R)-5,10-methenyltetrahydrofolate + NADPH. It catalyses the reaction (6R)-5,10-methenyltetrahydrofolate + H2O = (6R)-10-formyltetrahydrofolate + H(+). It participates in one-carbon metabolism; tetrahydrofolate interconversion. Functionally, catalyzes the oxidation of 5,10-methylenetetrahydrofolate to 5,10-methenyltetrahydrofolate and then the hydrolysis of 5,10-methenyltetrahydrofolate to 10-formyltetrahydrofolate. The polypeptide is Bifunctional protein FolD 1 (Streptomyces avermitilis (strain ATCC 31267 / DSM 46492 / JCM 5070 / NBRC 14893 / NCIMB 12804 / NRRL 8165 / MA-4680)).